The following is a 362-amino-acid chain: Abnormal cell migration protein 13 (362 aa).

Residues methionine 1–alanine 20 form the signal peptide. Over glutamate 21 to glycine 237 the chain is Extracellular. 2 disulfides stabilise this stretch: cysteine 36-cysteine 68 and cysteine 98-cysteine 136. The CUB domain maps to cysteine 36–phenylalanine 175. An N-linked (GlcNAc...) asparagine glycan is attached at asparagine 63. N-linked (GlcNAc...) asparagine glycosylation is found at asparagine 145 and asparagine 161. In terms of domain architecture, LDL-receptor class A spans asparagine 182–glutamine 225. Cystine bridges form between cysteine 183/cysteine 195, cysteine 190/cysteine 208, and cysteine 202/cysteine 224. The helical transmembrane segment at valine 238–valine 258 threads the bilayer. Topologically, residues cysteine 259–leucine 362 are cytoplasmic. Positions serine 275 to threonine 311 are disordered. The segment covering aspartate 289 to serine 305 has biased composition (pro residues).

In terms of assembly, interacts with abl-1 (via SH2 and SH3 domains); the interaction is direct. Interacts with sem-5; the interaction is direct. As to expression, expressed in pharyngeal-intestinal valve cells and ventral cord neurons.

The protein resides in the cell membrane. Its subcellular location is the perikaryon. The protein localises to the cell projection. It is found in the axon. It localises to the dendrite. Its function is as follows. Probable receptor that acts as an upstream signaling protein to promote the guidance, migration and positioning of the right Q neuroblast (QR) and its descendants along the anteroposterior body axis, and also the anterior migration of BDU interneurons during larval development. Associates with and recruits the downstream components tyrosine kinase abl-1 and the tyrosine kinase adapter protein sem-5 to the leading edge of migrating Q neuroblasts and their descendants to activate signaling through the two parallel wve-1 and wsp-1 pathways, respectively, and direct migration along the anteroposterior body axis. Involved in cytoskeleton dynamics regulating the organization of the actin cytoskeleton at the leading edge of migrating cells to ensure correct Q cell polarity and promote migration. Role in cytoskeleton organization may be by activation of the wve-1 and wsp-1 pathways which recruit the Arp2/3 complex to the leading edge of migrating cells. Plays a role in regulating the asymmetric distribution of the actin cytoskeleton-binding protein cor-1 in Q neuroblasts which is required for the anterior migration of QR neuroblasts. The protein is Abnormal cell migration protein 13 of Caenorhabditis elegans.